The chain runs to 50 residues: Insulin-1 (50 aa).

3 cysteine pairs are disulfide-bonded: cysteine 7–cysteine 36, cysteine 19–cysteine 49, and cysteine 35–cysteine 40.

It belongs to the insulin family. Heterodimer of a B chain and an A chain linked by two disulfide bonds.

The protein localises to the secreted. In terms of biological role, insulin decreases blood glucose concentration. It increases cell permeability to monosaccharides, amino acids and fatty acids. It accelerates glycolysis, the pentose phosphate cycle, and glycogen synthesis in liver. The protein is Insulin-1 of Thunnus orientalis (North Pacific bluefin tuna).